We begin with the raw amino-acid sequence, 190 residues long: Probable chorismate pyruvate-lyase (190 aa).

The substrate site is built by arginine 77, leucine 115, and glutamate 174.

The protein belongs to the UbiC family.

The protein localises to the cytoplasm. It carries out the reaction chorismate = 4-hydroxybenzoate + pyruvate. Its pathway is cofactor biosynthesis; ubiquinone biosynthesis. Removes the pyruvyl group from chorismate, with concomitant aromatization of the ring, to provide 4-hydroxybenzoate (4HB) for the ubiquinone pathway. This Shewanella sp. (strain MR-4) protein is Probable chorismate pyruvate-lyase.